A 292-amino-acid polypeptide reads, in one-letter code: Elongation factor Ts (292 aa).

Residues 80-83 (TDFV) are involved in Mg(2+) ion dislocation from EF-Tu.

It belongs to the EF-Ts family.

It localises to the cytoplasm. In terms of biological role, associates with the EF-Tu.GDP complex and induces the exchange of GDP to GTP. It remains bound to the aminoacyl-tRNA.EF-Tu.GTP complex up to the GTP hydrolysis stage on the ribosome. The polypeptide is Elongation factor Ts (Pediococcus pentosaceus (strain ATCC 25745 / CCUG 21536 / LMG 10740 / 183-1w)).